Consider the following 198-residue polypeptide: Recombination protein RecR (198 aa).

Residues 57–72 form a C4-type zinc finger; it reads CSICGNLTESDPCAIC. Residues 80–175 enclose the Toprim domain; it reads TTILVVEESK…KVTRLAHGLA (96 aa).

It belongs to the RecR family.

May play a role in DNA repair. It seems to be involved in an RecBC-independent recombinational process of DNA repair. It may act with RecF and RecO. The protein is Recombination protein RecR of Lactococcus lactis subsp. cremoris (strain SK11).